Reading from the N-terminus, the 454-residue chain is GTPase Der (454 aa).

EngA-type G domains follow at residues 4-168 (PQVA…PEKD) and 178-352 (MKIA…KQAQ). GTP-binding positions include 10-17 (GRPNVGKS), 57-61 (DTGGM), 120-123 (NKAD), 184-191 (GRRNVGKS), 231-235 (DTPGL), and 296-299 (NKWD). The 85-residue stretch at 353–437 (SRVSTGELNR…PIKLYMQQRS (85 aa)) folds into the KH-like domain.

Belongs to the TRAFAC class TrmE-Era-EngA-EngB-Septin-like GTPase superfamily. EngA (Der) GTPase family. As to quaternary structure, associates with the 50S ribosomal subunit.

Functionally, GTPase that plays an essential role in the late steps of ribosome biogenesis. This Rhodopirellula baltica (strain DSM 10527 / NCIMB 13988 / SH1) protein is GTPase Der.